Consider the following 131-residue polypeptide: Small ribosomal subunit protein bS6 (131 aa).

Residues 98–131 (EASPMVKAKDERRERREDFANETADDSEAGDSEE) are disordered. Residues 104-116 (KAKDERRERREDF) are compositionally biased toward basic and acidic residues. Residues 120 to 131 (TADDSEAGDSEE) show a composition bias toward acidic residues.

It belongs to the bacterial ribosomal protein bS6 family.

In terms of biological role, binds together with bS18 to 16S ribosomal RNA. The chain is Small ribosomal subunit protein bS6 from Klebsiella pneumoniae (strain 342).